Consider the following 161-residue polypeptide: Small ribosomal subunit protein uS9 (161 aa).

Disordered regions lie at residues 1–27 (MAQI…APKA) and 142–161 (KERK…FSKR).

The protein belongs to the universal ribosomal protein uS9 family.

This chain is Small ribosomal subunit protein uS9, found in Clavibacter michiganensis subsp. michiganensis (strain NCPPB 382).